The sequence spans 2225 residues: Nonribisomal peptide synthetase notE' (2225 aa).

Residues 24–59 (TVRESLSSSPSPLPSLASPVSSGSEPPAFGETQPQS) are disordered. Residues 28 to 49 (SLSSSPSPLPSLASPVSSGSEP) are compositionally biased toward low complexity. Residues 83 to 482 (QERCKEAPQS…GRRDGQLKIR (400 aa)) are adenylation 1. Positions 614 to 690 (SPTTATELML…EQAQRATPMT (77 aa)) constitute a Carrier 1 domain. Position 651 is an O-(pantetheine 4'-phosphoryl)serine (S651). The condensation 1 stretch occupies residues 730 to 1142 (EDIYPCTPLQ…DLASPLDQDL (413 aa)). The adenylation 2 stretch occupies residues 1164–1563 (AQAMQQPSRQ…GRRDTQVKVR (400 aa)). The Carrier 2 domain maps to 1699–1775 (PVSHGAELRL…DLARCTGEEQ (77 aa)). An O-(pantetheine 4'-phosphoryl)serine modification is found at S1736. The segment at 1827–2138 (FAFHGEVSID…FILQHQNIDM (312 aa)) is condensation 2.

This sequence belongs to the NRP synthetase family.

It catalyses the reaction L-proline + L-tryptophan + 2 ATP = brevianamide F + 2 AMP + 2 diphosphate + 2 H(+). The protein operates within alkaloid biosynthesis. Functionally, nonribisomal peptide synthetase; part of the gene cluster that mediates the biosynthesis of notoamide, a fungal indole alkaloid that belongs to a family of natural products containing a characteristic bicyclo[2.2.2]diazaoctane core. The first step of notoamide biosynthesis involves coupling of L-proline and L-tryptophan by the bimodular NRPS notE', to produce cyclo-L-tryptophan-L-proline called brevianamide F. The reverse prenyltransferase notF' then acts as a deoxybrevianamide E synthase and converts brevianamide F to deoxybrevianamide E via reverse prenylation at C-2 of the indole ring leading to the bicyclo[2.2.2]diazaoctane core. Deoxybrevianamide E is further hydroxylated at C-6 of the indole ring, likely catalyzed by the cytochrome P450 monooxygenase notG', to yield 6-hydroxy-deoxybrevianamide E. 6-hydroxy-deoxybrevianamide E is a specific substrate of the prenyltransferase notC' for normal prenylation at C-7 to produce 6-hydroxy-7-prenyl-deoxybrevianamide, also called notoamide S. As the proposed pivotal branching point in notoamide biosynthesis, notoamide S can be diverted to notoamide E through an oxidative pyran ring closure putatively catalyzed by either notH' cytochrome P450 monooxygenase or the notD' FAD-linked oxidoreductase. This step would be followed by an indole 2,3-epoxidation-initiated pinacol-like rearrangement catalyzed by the notB' FAD-dependent monooxygenase leading to the formation of notoamide C and notoamide D. On the other hand notoamide S is converted to notoamide T by notH' (or notD'), a bifunctional oxidase that also functions as the intramolecular Diels-Alderase responsible for generation of (-)-notoamide T. To generate antipodal (+)-notoaminide T, notH (or notD) in Aspergillus strain MF297-2 is expected to catalyze a Diels-Alder reaction leading to the opposite stereochemistry. The remaining oxidoreductase notD' (or notH') likely catalyzes the oxidative pyran ring formation to yield (-)-stephacidin A. The FAD-dependent monooxygenase notI' is highly similar to notB' and is predicted to catalyze a similar conversion from (-)-stephacidin A to (+)-notoamide B via the 2,3-epoxidation of (-)-stephacidin A followed by a pinacol-type rearrangement. Finally, it remains unclear which enzyme could be responsible for the final hydroxylation steps leading to notoamide A and sclerotiamide. The sequence is that of Nonribisomal peptide synthetase notE' from Aspergillus versicolor.